We begin with the raw amino-acid sequence, 733 residues long: Ribosomal protein S6 kinase 2 alpha (733 aa).

The tract at residues 18-38 (EDPENGHGSPEEGGRHTSKDE) is disordered. The Protein kinase 1 domain maps to 62–321 (FVLLKVLGQG…AEEIKRQPFF (260 aa)). ATP is bound by residues 68–76 (LGQGSFGKV) and Lys-94. Asp-187 acts as the Proton acceptor in catalysis. Ser-221 is modified (phosphoserine). The region spanning 322–391 (STIDWNKLFR…VAPALVEEDA (70 aa)) is the AGC-kinase C-terminal domain. Thr-359 carries the post-translational modification Phosphothreonine. Ser-363 carries the post-translational modification Phosphoserine. Ser-380 bears the Phosphoserine; by autocatalysis mark. Residues 416 to 673 (YTVRETIGVG…AKQVLQHEWI (258 aa)) enclose the Protein kinase 2 domain. Residues 422-430 (IGVGSYSVC) and Lys-445 contribute to the ATP site. Asp-533 acts as the Proton acceptor in catalysis. Position 571 is a phosphothreonine (Thr-571). At Ser-730 the chain carries Phosphoserine.

It belongs to the protein kinase superfamily. AGC Ser/Thr protein kinase family. S6 kinase subfamily. It depends on Mg(2+) as a cofactor. Autophosphorylated on Ser-380, as part of the activation process.

The enzyme catalyses L-seryl-[protein] + ATP = O-phospho-L-seryl-[protein] + ADP + H(+). It carries out the reaction L-threonyl-[protein] + ATP = O-phospho-L-threonyl-[protein] + ADP + H(+). With respect to regulation, activated by multiple phosphorylations on threonine and serine residues. In terms of biological role, serine/threonine kinase that may play a role in mediating the growth-factor and stress induced activation of transcription. The polypeptide is Ribosomal protein S6 kinase 2 alpha (rps6ka) (Xenopus laevis (African clawed frog)).